A 951-amino-acid chain; its full sequence is Metal transporter CNNM1 (951 aa).

The chain crosses the membrane as a helical span at residues 23 to 43 (AVLLLFFSLSPRPPAAAAWLL). The interval 114 to 138 (GAGGAAPSAVPTRPPGPQRCREQSD) is disordered. In terms of domain architecture, CNNM transmembrane spans 218-414 (LLPPAWLRAL…DPYSDLVKEE (197 aa)). 3 helical membrane passes run 222–242 (AWLRALGALLLLALSALFSGL), 282–302 (LLCTLLLGQAGANAALAGWLY), and 319–339 (AGVHFPWLPALVCTGAVFLGA). CBS domains follow at residues 433–495 (LTPL…CTPL) and 502–568 (YNRP…ILDE). 2 stretches are compositionally biased toward polar residues: residues 731 to 740 (SRCSGLNRSE) and 814 to 824 (KAPTTRGTPQT). Disordered stretches follow at residues 731-754 (SRCSGLNRSESPNRERSDFGGSNT) and 795-830 (MDSSPQSPDMEAFTDGDSTKAPTTRGTPQTPKDDPV). Phosphothreonine is present on residues T821 and T824. S850 carries the post-translational modification Phosphoserine. The disordered stretch occupies residues 903–951 (DPEASPCSSDSEENMGKKLLRTLSGRKRKKSADGERASEENSNLTPLIT). Residues 920-932 (KLLRTLSGRKRKK) are compositionally biased toward basic residues. A compositionally biased stretch (polar residues) spans 942–951 (ENSNLTPLIT).

The protein belongs to the ACDP family. In terms of tissue distribution, predominantly expressed in brain and testis, and, at lower levels, in kidney. In the brain, expressed in hippocampal neurons (at protein level).

It is found in the cell membrane. Its function is as follows. Probable metal transporter. The protein is Metal transporter CNNM1 (Cnnm1) of Mus musculus (Mouse).